Reading from the N-terminus, the 133-residue chain is Small ribosomal subunit protein uS8c (133 aa).

The protein belongs to the universal ribosomal protein uS8 family. In terms of assembly, part of the 30S ribosomal subunit.

The protein localises to the plastid. Its subcellular location is the chloroplast. In terms of biological role, one of the primary rRNA binding proteins, it binds directly to 16S rRNA central domain where it helps coordinate assembly of the platform of the 30S subunit. The sequence is that of Small ribosomal subunit protein uS8c (rps8) from Cyanidium caldarium (Red alga).